Consider the following 137-residue polypeptide: MPTINQLVRKGRVSKTKKSDSPALNKGYNSFKKRMTDQNAPQKRGVCTRVGTLTPKKPNSALRKYARVRLSNNMEVTAYIPGIGHNLQEHSVVLIRGGRVKDLPGVRYHIVRGALDTAGVEGRKQGRSKYGTKRPKK.

The interval 1–43 (MPTINQLVRKGRVSKTKKSDSPALNKGYNSFKKRMTDQNAPQK) is disordered.

The protein belongs to the universal ribosomal protein uS12 family. In terms of assembly, part of the 30S ribosomal subunit. Contacts proteins S8 and S17. May interact with IF1 in the 30S initiation complex.

With S4 and S5 plays an important role in translational accuracy. Functionally, interacts with and stabilizes bases of the 16S rRNA that are involved in tRNA selection in the A site and with the mRNA backbone. Located at the interface of the 30S and 50S subunits, it traverses the body of the 30S subunit contacting proteins on the other side and probably holding the rRNA structure together. The combined cluster of proteins S8, S12 and S17 appears to hold together the shoulder and platform of the 30S subunit. The protein is Small ribosomal subunit protein uS12 of Oceanobacillus iheyensis (strain DSM 14371 / CIP 107618 / JCM 11309 / KCTC 3954 / HTE831).